The primary structure comprises 307 residues: Transcriptional repressor scratch 2 (307 aa).

An SNAG domain region spans residues 1 to 20 (MPRSFLVKKIKGDGFQCSGV). 2 disordered regions span residues 34–90 (LPGA…PQSS) and 116–148 (GRSR…AGAQ). The span at 124-148 (GGGGDAGGSGDAGGAGGRAGRAGAQ) shows a compositional bias: gly residues. 4 C2H2-type zinc fingers span residues 155–177 (HACA…KQTH), 186–208 (RKCP…LLTH), 212–234 (HKCG…MRSH), and 240–262 (FGCA…MQTH). Residues 268–291 (YRCRQCDKSFALKSYLHKHCEAAC) form a C2H2-type 5; atypical zinc finger.

This sequence belongs to the snail C2H2-type zinc-finger protein family.

Its subcellular location is the nucleus. Its function is as follows. May be involved in transcriptional regulation. In Homo sapiens (Human), this protein is Transcriptional repressor scratch 2 (SCRT2).